The following is a 251-amino-acid chain: Demethylmenaquinone methyltransferase (251 aa).

S-adenosyl-L-methionine-binding positions include threonine 66, aspartate 87, and 115–116 (NA).

This sequence belongs to the class I-like SAM-binding methyltransferase superfamily. MenG/UbiE family.

It catalyses the reaction a 2-demethylmenaquinol + S-adenosyl-L-methionine = a menaquinol + S-adenosyl-L-homocysteine + H(+). It functions in the pathway quinol/quinone metabolism; menaquinone biosynthesis; menaquinol from 1,4-dihydroxy-2-naphthoate: step 2/2. Functionally, methyltransferase required for the conversion of demethylmenaquinol (DMKH2) to menaquinol (MKH2). The chain is Demethylmenaquinone methyltransferase from Symbiobacterium thermophilum (strain DSM 24528 / JCM 14929 / IAM 14863 / T).